The sequence spans 460 residues: tRNA modification GTPase MnmE (460 aa).

(6S)-5-formyl-5,6,7,8-tetrahydrofolate contacts are provided by Arg26, Glu88, and Arg127. The 160-residue stretch at 222 to 381 (GLKVAIVGRP…LESAILSKVQ (160 aa)) folds into the TrmE-type G domain. Residue Asn232 participates in K(+) binding. Residues 232 to 237 (NVGKSS), 251 to 257 (TELPGTT), and 276 to 279 (DTAG) each bind GTP. Residue Ser236 coordinates Mg(2+). Thr251, Leu253, and Thr256 together coordinate K(+). Thr257 lines the Mg(2+) pocket. Residue Lys460 participates in (6S)-5-formyl-5,6,7,8-tetrahydrofolate binding.

It belongs to the TRAFAC class TrmE-Era-EngA-EngB-Septin-like GTPase superfamily. TrmE GTPase family. Homodimer. Heterotetramer of two MnmE and two MnmG subunits. Requires K(+) as cofactor.

It localises to the cytoplasm. Its function is as follows. Exhibits a very high intrinsic GTPase hydrolysis rate. Involved in the addition of a carboxymethylaminomethyl (cmnm) group at the wobble position (U34) of certain tRNAs, forming tRNA-cmnm(5)s(2)U34. In Cyanothece sp. (strain PCC 7425 / ATCC 29141), this protein is tRNA modification GTPase MnmE.